Here is a 303-residue protein sequence, read N- to C-terminus: Ribosomal RNA small subunit methyltransferase A (303 aa).

Over residues 1-19 the composition is skewed to low complexity; the sequence is MSSRPPASFSATFSAARSS. Residues 1-34 are disordered; that stretch reads MSSRPPASFSATFSAARSSKCVPPPRRPSTDVSL. S-adenosyl-L-methionine contacts are provided by His55, Leu57, Gly82, Glu104, Asp130, and Asn149.

Belongs to the class I-like SAM-binding methyltransferase superfamily. rRNA adenine N(6)-methyltransferase family. RsmA subfamily.

The protein resides in the cytoplasm. The catalysed reaction is adenosine(1518)/adenosine(1519) in 16S rRNA + 4 S-adenosyl-L-methionine = N(6)-dimethyladenosine(1518)/N(6)-dimethyladenosine(1519) in 16S rRNA + 4 S-adenosyl-L-homocysteine + 4 H(+). Its function is as follows. Specifically dimethylates two adjacent adenosines (A1518 and A1519) in the loop of a conserved hairpin near the 3'-end of 16S rRNA in the 30S particle. May play a critical role in biogenesis of 30S subunits. This Gluconobacter oxydans (strain 621H) (Gluconobacter suboxydans) protein is Ribosomal RNA small subunit methyltransferase A.